A 216-amino-acid polypeptide reads, in one-letter code: Methylthioribulose-1-phosphate dehydratase (216 aa).

His101 and His103 together coordinate Zn(2+).

This sequence belongs to the aldolase class II family. MtnB subfamily. It depends on Zn(2+) as a cofactor.

The catalysed reaction is 5-(methylsulfanyl)-D-ribulose 1-phosphate = 5-methylsulfanyl-2,3-dioxopentyl phosphate + H2O. Its pathway is amino-acid biosynthesis; L-methionine biosynthesis via salvage pathway; L-methionine from S-methyl-5-thio-alpha-D-ribose 1-phosphate: step 2/6. Functionally, catalyzes the dehydration of methylthioribulose-1-phosphate (MTRu-1-P) into 2,3-diketo-5-methylthiopentyl-1-phosphate (DK-MTP-1-P). In Bradyrhizobium sp. (strain BTAi1 / ATCC BAA-1182), this protein is Methylthioribulose-1-phosphate dehydratase.